The sequence spans 242 residues: UPF0309 protein BH3325 (242 aa).

The SIS domain maps to 34–217; it reads VSEAVMNGGR…HLLVQQGFEP (184 aa).

The protein belongs to the UPF0309 family.

The chain is UPF0309 protein BH3325 from Halalkalibacterium halodurans (strain ATCC BAA-125 / DSM 18197 / FERM 7344 / JCM 9153 / C-125) (Bacillus halodurans).